We begin with the raw amino-acid sequence, 155 residues long: Small ribosomal subunit protein uS7cz/uS7cy (155 aa).

This sequence belongs to the universal ribosomal protein uS7 family. As to quaternary structure, part of the 30S ribosomal subunit.

The protein localises to the plastid. It is found in the chloroplast. One of the primary rRNA binding proteins, it binds directly to 16S rRNA where it nucleates assembly of the head domain of the 30S subunit. This chain is Small ribosomal subunit protein uS7cz/uS7cy (rps7-A), found in Nandina domestica (Heavenly bamboo).